The sequence spans 422 residues: MLNRLSHNTVSDTVIADAIAEELDRQKTQIELIASENIVSADVLAAQGSVLTNKYAEGYPGKRYYGGCEFVDKVEQVAIDRLKQLFGAEFANVQPHSGAQANQAVFLALLQPGDRIMGLSLAHGGHLTHGSPVTMSGKWFDVVSYEVDPETHLIDMEKVREKALETKPKLIVAGASAYPRQIDFAGFREIADEVGAYLMVDMAHYAGLIAGGHYPNAVPHAHVTTSTTHKTLRGPRGGVILTNDADLAKKLNSAVFPGNQGGPLMHVIAAKAVAFGEALRPEFSDYAGQVIANAQALAKVLIQGGLGIVSGGTDSHMVLVDLRPKGVTGKIAEIALERAGLTCNKNSIPNDPEKPFVTSGIRLGSSAGTTRGFGVLEFEKIGALILRVIDALATNAEGDSAVEAEVREEVAALCEAFPIYVS.

(6S)-5,6,7,8-tetrahydrofolate is bound by residues leucine 121 and 125–127 (GHL). Residue lysine 230 is modified to N6-(pyridoxal phosphate)lysine.

Belongs to the SHMT family. As to quaternary structure, homodimer. Pyridoxal 5'-phosphate is required as a cofactor.

It localises to the cytoplasm. It carries out the reaction (6R)-5,10-methylene-5,6,7,8-tetrahydrofolate + glycine + H2O = (6S)-5,6,7,8-tetrahydrofolate + L-serine. It functions in the pathway one-carbon metabolism; tetrahydrofolate interconversion. The protein operates within amino-acid biosynthesis; glycine biosynthesis; glycine from L-serine: step 1/1. Its function is as follows. Catalyzes the reversible interconversion of serine and glycine with tetrahydrofolate (THF) serving as the one-carbon carrier. This reaction serves as the major source of one-carbon groups required for the biosynthesis of purines, thymidylate, methionine, and other important biomolecules. Also exhibits THF-independent aldolase activity toward beta-hydroxyamino acids, producing glycine and aldehydes, via a retro-aldol mechanism. The sequence is that of Serine hydroxymethyltransferase 2 from Agrobacterium fabrum (strain C58 / ATCC 33970) (Agrobacterium tumefaciens (strain C58)).